Here is a 991-residue protein sequence, read N- to C-terminus: uncharacterized protein (991 aa).

A signal peptide spans 1–17; that stretch reads MLWPAALVAMFALAARA. Disordered regions lie at residues 332–352, 392–425, 469–511, 542–569, 587–641, and 658–734; these read DPLPRAPDYSYPTDDPAGETT, TTEDLTQETSTPTVTTVIDPTSGAVTTESRTTEG, EDST…EDTT, DTEAAQSATSISDAVTPEDLTPETTTPV, PAPT…NSLS, and ASSG…PPRI. The span at 400–413 shows a compositional bias: low complexity; that stretch reads TSTPTVTTVIDPTS. Polar residues predominate over residues 414-425; the sequence is GAVTTESRTTEG. A compositionally biased stretch (low complexity) spans 472 to 493; it reads TTTARAAEYPTPTTTTVEPRPA. The span at 542 to 554 shows a compositional bias: polar residues; sequence DTEAAQSATSISD. 2 stretches are compositionally biased toward low complexity: residues 556–569 and 598–615; these read VTPEDLTPETTTPV and ASTTPAPTATAVPTSHTP. 2 stretches are compositionally biased toward polar residues: residues 617–628 and 658–667; these read PQESTSTPSRAP and ASSGPGASTG. Low complexity predominate over residues 668–682; sequence ATTAPISPPWSASPA. Residues 686-710 are compositionally biased toward polar residues; it reads VTTSAARTLEPSSTRKAVAAESTTA.

This is an uncharacterized protein from Psittacid herpesvirus 1 (isolate Amazon parrot/-/97-0001/1997) (PsHV-1).